Consider the following 459-residue polypeptide: Septin-4 (459 aa).

Serine 10, serine 49, serine 98, and serine 99 each carry phosphoserine. 2 disordered regions span residues 18–52 and 70–98; these read FVKDFPGSEPCHPTESKTRVARPQILEPRPQSPDL and SQQYFCPPAPLSPSSRPRSPWGKLDPYDS. In terms of domain architecture, Septin-type G spans 122–395; it reads KGFDFTLMVA…ENYRAQCIQS (274 aa). Residues 132 to 139 form a G1 motif region; sequence GESGLGKS. Residues 132–139 and threonine 166 contribute to the GTP site; that span reads GESGLGKS. Positions 189–192 are G3 motif; the sequence is DTPG. The interval 270-273 is G4 motif; the sequence is AKAD. 271–279 is a binding site for GTP; the sequence is KADTLTPSE. Phosphoserine is present on serine 306. Residues glycine 329 and arginine 344 each coordinate GTP. The segment at 410–430 is disordered; that stretch reads TRESGTDFPIPAVPPGTDPET. The residue at position 413 (serine 413) is a Phosphoserine. The residue at position 415 (threonine 415) is a Phosphothreonine. The stretch at 434-459 forms a coiled coil; the sequence is IREKDEELRRMQEMLHKIQRQMKETH.

It belongs to the TRAFAC class TrmE-Era-EngA-EngB-Septin-like GTPase superfamily. Septin GTPase family. In terms of assembly, septins polymerize into heterooligomeric protein complexes that form filaments, and can associate with cellular membranes, actin filaments and microtubules. GTPase activity is required for filament formation. Interacts with SEPTIN8. Component of a septin core octameric complex consisting of SEPTIN12, SEPTIN7, SEPTIN6 and SEPTIN2 or SEPTIN4 in the order 12-7-6-2-2-6-7-12 or 12-7-6-4-4-6-7-12. Interacts with SEPTIN14 (via C-terminus). Interacts with DYRK1A. Interacts with SLC6A3/DAT and SNCA/alpha-synuclein. Interacts with STX1A; in the striatum. Interacts with XIAP (via BIR3 domain) following the induction of apoptosis. Interacts with AREL1 (via HECT domain); in the cytoplasm following induction of apoptosis. Phosphorylated by DYRK1A.

It localises to the cytoplasm. The protein resides in the cell projection. Its subcellular location is the cilium. It is found in the flagellum. The protein localises to the cytoplasmic vesicle. It localises to the secretory vesicle. The protein resides in the axon. Its subcellular location is the dendrite. It is found in the perikaryon. Functionally, filament-forming cytoskeletal GTPase. Pro-apoptotic protein involved in LGR5-positive intestinal stem cell and Paneth cell expansion in the intestines, via its interaction with XIAP. May also play a role in the regulation of cell fate in the intestine. Positive regulator of apoptosis involved in hematopoietic stem cell homeostasis; via its interaction with XIAP. Negative regulator of repair and hair follicle regeneration in response to injury, due to inhibition of hair follicle stem cell proliferation, potentially via its interaction with XIAP. Plays an important role in male fertility and sperm motility. During spermiogenesis, essential for the establishment of the annulus (a fibrous ring structure connecting the midpiece and the principal piece of the sperm flagellum) which is a requisite for the structural and mechanical integrity of the sperm. Involved in the migration of cortical neurons and the formation of neuron leading processes during embryonic development. Required for dopaminergic metabolism in presynaptic autoreceptors; potentially via activity as a presynaptic scaffold protein. The protein is Septin-4 of Rattus norvegicus (Rat).